The sequence spans 646 residues: Peptidylprolyl isomerase domain and WD repeat-containing protein 1 (646 aa).

Positions 1 to 30 (MAAESGSDFQQRRRRRRDPEEPEKTELSER) are disordered. At Ala2 the chain carries N-acetylalanine. Residues 17–30 (RDPEEPEKTELSER) show a composition bias toward basic and acidic residues. WD repeat units follow at residues 88-126 (MHRD…IEFV), 131-170 (SHLG…MINM), 221-260 (LHTS…YKFP), and 278-319 (KCKA…RVFD). The segment covering 455–478 (EPEDTKSADSDRDVFNEKPSKEEV) has biased composition (basic and acidic residues). The tract at residues 455–490 (EPEDTKSADSDRDVFNEKPSKEEVMAATQAEGPKRV) is disordered. The PPIase cyclophilin-type domain occupies 490 to 645 (VSDSAIIHTS…EDVSIINITV (156 aa)).

The protein belongs to the cyclophilin-type PPIase family. PPIL1 subfamily. In terms of assembly, identified in the spliceosome C complex.

Its subcellular location is the nucleus. The enzyme catalyses [protein]-peptidylproline (omega=180) = [protein]-peptidylproline (omega=0). Inhibited by cyclosporin A (CsA). Its function is as follows. PPIase that catalyzes the cis-trans isomerization of proline imidic peptide bonds in oligopeptides and may therefore assist protein folding. May be involved in pre-mRNA splicing. The chain is Peptidylprolyl isomerase domain and WD repeat-containing protein 1 from Pongo abelii (Sumatran orangutan).